A 364-amino-acid polypeptide reads, in one-letter code: tRNA N6-adenosine threonylcarbamoyltransferase (364 aa).

Residues His118 and His122 each contribute to the Fe cation site. Substrate-binding positions include 140–144, Asp173, Gly186, and Asn288; that span reads LVSGG. Asp316 provides a ligand contact to Fe cation.

Belongs to the KAE1 / TsaD family. It depends on Fe(2+) as a cofactor.

The protein localises to the cytoplasm. The catalysed reaction is L-threonylcarbamoyladenylate + adenosine(37) in tRNA = N(6)-L-threonylcarbamoyladenosine(37) in tRNA + AMP + H(+). In terms of biological role, required for the formation of a threonylcarbamoyl group on adenosine at position 37 (t(6)A37) in tRNAs that read codons beginning with adenine. Is involved in the transfer of the threonylcarbamoyl moiety of threonylcarbamoyl-AMP (TC-AMP) to the N6 group of A37, together with TsaE and TsaB. TsaD likely plays a direct catalytic role in this reaction. The sequence is that of tRNA N6-adenosine threonylcarbamoyltransferase from Cereibacter sphaeroides (strain ATCC 17023 / DSM 158 / JCM 6121 / CCUG 31486 / LMG 2827 / NBRC 12203 / NCIMB 8253 / ATH 2.4.1.) (Rhodobacter sphaeroides).